The sequence spans 2360 residues: Nucleoprotein TPR (2360 aa).

Alanine 2 carries the N-acetylalanine modification. The sufficient for interaction with TPR stretch occupies residues 3 to 13; it reads AVLQQVLERPE. The segment at 14–117 is necessary for interaction with HSF1; it reads LNKLPKSTQN…GIQSQFTRAK (104 aa). The stretch at 24–370 forms a coiled coil; sequence KLEKFLAEQQ…SATKRKGAIL (347 aa). 3 positions are modified to N6-acetyllysine: lysine 252, lysine 312, and lysine 345. Serine 379 carries the post-translational modification Phosphoserine. Positions 423 to 603 form a coiled coil; that stretch reads LDEIVKEVEA…RESRQHQMQL (181 aa). N6-acetyllysine is present on residues lysine 428, lysine 457, and lysine 477. The tract at residues 437 to 513 is necessary for association to the NPC; that stretch reads LKRQREEYER…LMELEEARGN (77 aa). Phosphoserine occurs at positions 522, 523, and 632. The stretch at 664 to 1172 forms a coiled coil; sequence ETIEAKAALK…IEKLSDKVVT (509 aa). Residues lysine 713, lysine 723, lysine 748, and lysine 755 each carry the N6-acetyllysine modification. Polar residues predominate over residues 915-924; it reads LASQSTQRTG. The disordered stretch occupies residues 915–939; it reads LASQSTQRTGKGQPGDRDDVDDLKS. A compositionally biased stretch (basic and acidic residues) spans 928 to 939; sequence PGDRDDVDDLKS. Phosphoserine is present on residues serine 1180 and serine 1185. 2 coiled-coil regions span residues 1215–1420 and 1472–1629; these read EVAQ…LDAK and VQEM…QRDE. The necessary for interaction with HSF1 stretch occupies residues 1218–1320; it reads QVESLRYRQR…NAELSEKSGM (103 aa). Disordered regions lie at residues 1479 to 1520 and 1618 to 1673; these read KDNL…TAQL and EHQE…PTPV. 2 stretches are compositionally biased toward basic and acidic residues: residues 1503–1512 and 1618–1630; these read LSEKETEARS and EHQERHLEQRDEP. Positions 1632–1651 are enriched in polar residues; that stretch reads EPTNKAPEQQRQITLKTTPA. Lysine 1689 is subject to N6-acetyllysine. Phosphothreonine is present on threonine 1691. The segment covering 1801-1826 has biased composition (polar residues); that stretch reads QSSPVERPSTSTAVFGTVSATPSSSL. A disordered region spans residues 1801–2122; that stretch reads QSSPVERPST…TPGIGGMQQH (322 aa). Positions 1811–1866 are sufficient and essential for mediating its nuclear import; sequence STAVFGTVSATPSSSLPKRAREEEEDSTIEAGDQVSDDTVEMPLPKKLKTVTPVGT. Positions 1866-1880 are enriched in acidic residues; that stretch reads TEEEVMAEESTDGEA. Residues 1881 to 1892 show a composition bias toward polar residues; that stretch reads ETQTYNQDSQDS. At serine 1892 the chain carries Phosphoserine. Low complexity predominate over residues 1923 to 1934; sequence QSDQQTTSSQDG. Composition is skewed to acidic residues over residues 1945–1986 and 1996–2017; these read DSDD…EDSN and DGYEADDAEGGDGTDPGTETEE. Polar residues predominate over residues 2023-2061; the sequence is ESNQRAADSQNSGEGNTSAAESSFSQEVAREQQPTSASE. Phosphoserine occurs at positions 2031, 2034, 2045, 2047, and 2070. Arginine 2103 and arginine 2108 each carry omega-N-methylarginine. Phosphothreonine occurs at positions 2113 and 2134. The residue at position 2152 (serine 2152) is a Phosphoserine. Arginine 2160 carries the post-translational modification Omega-N-methylarginine. A compositionally biased stretch (polar residues) spans 2224-2241; sequence ESTTSDASEHASQSVPMV. The tract at residues 2224–2360 is disordered; it reads ESTTSDASEH…RGGINRGNIN (137 aa). Over residues 2242-2254 the composition is skewed to low complexity; the sequence is TTSTGTLSTTNET. Acidic residues-rich tracts occupy residues 2256–2269 and 2282–2296; these read AGDDGDEVFVETES and SQQEEEPVQASDESD. A compositionally biased stretch (low complexity) spans 2297-2317; the sequence is LPSTSQDPPSSSSVDTSSSQP. An asymmetric dimethylarginine mark is found at arginine 2340, arginine 2342, and arginine 2351. Residues 2349–2360 show a composition bias toward gly residues; sequence GGRGGINRGNIN.

This sequence belongs to the TPR family. In terms of assembly, homodimer. Part of the nuclear pore complex (NPC). Associates with the XPO1/CRM1-mediated nuclear export complex, the Importin alpha/Importin beta receptor and the dynein 1 complex. Interacts (via C-terminal domain) with the KPNB1; the interaction occurs in a RanGTP-dependent manner. Interacts (via C-terminal region and phosphorylated form) with MAPK1/ERK2 (via phosphorylated form); the interaction requires dimerization of MAPK1/ERK2 and increases following EGF stimulation. Interacts with MAPK3/ERK1; the interaction increases following EGF stimulation. Interacts (via coiled coil region) with NUP153; the interaction is direct. Interacts with HSF1; the interaction increases in a stress-responsive manner and stimulates export of stress-induced HSP70 mRNA. Interacts with huntingtin/HTT; the interaction is inhibited by aggregated huntingtin/HTT forms with expanded polyglutamine stretch. Interacts with MAD1L1 (via N-terminal region), MAD2L1, and TTK; the interactions occurs in a microtubule-independent manner. Interacts (via middle region) with DYNLL1. Interacts with DCTN1, dynein, NUP153 and tubulin. Interacts with IFI204 (via C-terminal region). Interacts with IFI203. Interacts with MTA1. Interacts with ZC3HC1; this interaction mediates ZC3HC1 nuclear envelopes (NE)-association but also required for proper positioning of a substantial amount of TPR at the nuclear basket (NB). Post-translationally, phosphorylated. Phosphorylation occurs on serine and threonine residues (comprised in the C-terminal region) by MAPK1/ERK2 and stabilizes the interaction between these two proteins.

The protein resides in the nucleus. It localises to the nucleus membrane. Its subcellular location is the nucleus envelope. The protein localises to the nuclear pore complex. It is found in the cytoplasm. The protein resides in the cytoskeleton. It localises to the spindle. Its subcellular location is the chromosome. The protein localises to the centromere. It is found in the kinetochore. Functionally, component of the nuclear pore complex (NPC), a complex required for the trafficking across the nuclear envelope. Functions as a scaffolding element in the nuclear phase of the NPC essential for normal nucleocytoplasmic transport of proteins and mRNAs, plays a role in the establishment of nuclear-peripheral chromatin compartmentalization in interphase, and in the mitotic spindle checkpoint signaling during mitosis. Involved in the quality control and retention of unspliced mRNAs in the nucleus; in association with NUP153, regulates the nuclear export of unspliced mRNA species bearing constitutive transport element (CTE) in a NXF1- and KHDRBS1-independent manner. Negatively regulates both the association of CTE-containing mRNA with large polyribosomes and translation initiation. Does not play any role in Rev response element (RRE)-mediated export of unspliced mRNAs. Implicated in nuclear export of mRNAs transcribed from heat shock gene promoters; associates both with chromatin in the HSP70 promoter and with mRNAs transcribed from this promoter under stress-induced conditions. Modulates the nucleocytoplasmic transport of activated MAPK1/ERK2 and huntingtin/HTT and may serve as a docking site for the XPO1/CRM1-mediated nuclear export complex. Also plays a role as a structural and functional element of the perinuclear chromatin distribution; involved in the formation and/or maintenance of NPC-associated perinuclear heterochromatin exclusion zones (HEZs). Finally, acts as a spatial regulator of the spindle-assembly checkpoint (SAC) response ensuring a timely and effective recruitment of spindle checkpoint proteins like MAD1L1 and MAD2L1 to unattached kinetochore during the metaphase-anaphase transition before chromosome congression. Its N-terminus is involved in activation of oncogenic kinases. Plays a role in the regulation of nuclear protein export. This is Nucleoprotein TPR from Rattus norvegicus (Rat).